The following is a 335-amino-acid chain: Phosphate acyltransferase (335 aa).

Belongs to the PlsX family. In terms of assembly, homodimer. Probably interacts with PlsY.

Its subcellular location is the cytoplasm. It catalyses the reaction a fatty acyl-[ACP] + phosphate = an acyl phosphate + holo-[ACP]. It functions in the pathway lipid metabolism; phospholipid metabolism. In terms of biological role, catalyzes the reversible formation of acyl-phosphate (acyl-PO(4)) from acyl-[acyl-carrier-protein] (acyl-ACP). This enzyme utilizes acyl-ACP as fatty acyl donor, but not acyl-CoA. The polypeptide is Phosphate acyltransferase (Desulforudis audaxviator (strain MP104C)).